Reading from the N-terminus, the 222-residue chain is Interleukin-12 subunit alpha (222 aa).

The N-terminal stretch at 1–25 (MCPPRGLLLVTILVLLSHLDHLTWA) is a signal peptide. Disulfide bonds link Cys-40–Cys-113, Cys-67–Cys-199, and Cys-88–Cys-126. N-linked (GlcNAc...) asparagine glycosylation is found at Asn-42, Asn-96, and Asn-110.

The protein belongs to the IL-6 superfamily. Heterodimer with IL12B; disulfide-linked. This heterodimer is known as interleukin IL-12. Heterodimer with EBI3/IL27B; not disulfide-linked. This heterodimer is known as interleukin IL-35. Interacts with NBR1; this interaction promotes IL-12 secretion.

The protein resides in the secreted. Heterodimerizes with IL12B to form the IL-12 cytokine or with EBI3/IL27B to form the IL-35 cytokine. IL-12 is primarily produced by professional antigen-presenting cells (APCs) such as B-cells and dendritic cells (DCs) as well as macrophages and granulocytes and regulates T-cell and natural killer-cell responses, induces the production of interferon-gamma (IFN-gamma), favors the differentiation of T-helper 1 (Th1) cells and is an important link between innate resistance and adaptive immunity. Mechanistically, exerts its biological effects through a receptor composed of IL12R1 and IL12R2 subunits. Binding to the receptor results in the rapid tyrosine phosphorylation of a number of cellular substrates including the JAK family kinases TYK2 and JAK2. In turn, recruited STAT4 gets phosphorylated and translocates to the nucleus where it regulates cytokine/growth factor responsive genes. As part of IL-35, plays essential roles in maintaining the immune homeostasis of the liver microenvironment and also functions as an immune-suppressive cytokine. Mediates biological events through unconventional receptors composed of IL12RB2 and gp130/IL6ST heterodimers or homodimers. Signaling requires the transcription factors STAT1 and STAT4, which form a unique heterodimer that binds to distinct DNA sites. The chain is Interleukin-12 subunit alpha (IL12A) from Canis lupus familiaris (Dog).